Reading from the N-terminus, the 319-residue chain is HTH-type transcriptional regulator YidZ (319 aa).

The region spanning 8-65 is the HTH lysR-type domain; that stretch reads LDLNLLLCLQLLMQERSVTKAAKRMNVTPSAVSKSLAKLRAWFDDPLFVNTPLGLAPT. The H-T-H motif DNA-binding region spans 25–44; that stretch reads VTKAAKRMNVTPSAVSKSLA.

Belongs to the LysR transcriptional regulatory family.

Its function is as follows. Involved in anaerobic NO protection. The polypeptide is HTH-type transcriptional regulator YidZ (Salmonella heidelberg (strain SL476)).